The following is a 269-amino-acid chain: Hydroxyethylthiazole kinase (269 aa).

Residue methionine 41 participates in substrate binding. Residues arginine 117 and serine 163 each coordinate ATP. Glycine 190 provides a ligand contact to substrate.

It belongs to the Thz kinase family. The cofactor is Mg(2+).

The catalysed reaction is 5-(2-hydroxyethyl)-4-methylthiazole + ATP = 4-methyl-5-(2-phosphooxyethyl)-thiazole + ADP + H(+). Its pathway is cofactor biosynthesis; thiamine diphosphate biosynthesis; 4-methyl-5-(2-phosphoethyl)-thiazole from 5-(2-hydroxyethyl)-4-methylthiazole: step 1/1. In terms of biological role, catalyzes the phosphorylation of the hydroxyl group of 4-methyl-5-beta-hydroxyethylthiazole (THZ). This Latilactobacillus sakei subsp. sakei (strain 23K) (Lactobacillus sakei subsp. sakei) protein is Hydroxyethylthiazole kinase.